The sequence spans 375 residues: 23S rRNA (uracil(747)-C(5))-methyltransferase RlmC (375 aa).

Positions 3, 11, 14, and 87 each coordinate [4Fe-4S] cluster. 4 residues coordinate S-adenosyl-L-methionine: Q212, F241, E262, and N307. Catalysis depends on C334, which acts as the Nucleophile.

This sequence belongs to the class I-like SAM-binding methyltransferase superfamily. RNA M5U methyltransferase family. RlmC subfamily.

The catalysed reaction is uridine(747) in 23S rRNA + S-adenosyl-L-methionine = 5-methyluridine(747) in 23S rRNA + S-adenosyl-L-homocysteine + H(+). Its function is as follows. Catalyzes the formation of 5-methyl-uridine at position 747 (m5U747) in 23S rRNA. This chain is 23S rRNA (uracil(747)-C(5))-methyltransferase RlmC, found in Enterobacter sp. (strain 638).